Reading from the N-terminus, the 489-residue chain is Protein K15 (489 aa).

A signal peptide spans 1 to 26; it reads MKTLIFFWNLWLWALLVCFWCITLVC. A run of 11 helical transmembrane segments spans residues 29-49, 63-83, 89-109, 121-141, 148-168, 175-195, 200-220, 237-257, 264-284, 296-316, and 324-344; these read TNSI…VSAI, WPSS…WNLS, TYAC…LTLI, HGIL…VHMS, WIFF…FATV, LVSS…VSCC, CTAT…TGII, FLLL…LLAI, IKGH…LYVW, MLHL…VMLL, and ILTM…LLVF.

Interacts with host LYN; this interaction modulates B-cells signaling. Interacts with host ITSN2.

Its subcellular location is the host cell membrane. The protein localises to the host Golgi apparatus. The protein resides in the host trans-Golgi network. Plays a crucial role for reactivation of the virus from latency, early viral gene expression and virus production. Modulates host signaling pathways including activation of MAP kinases c-JUN-N-terminal kinase (JNK), ERK2, and NF-kappa-B resulting in the activation of AP-1 and NFAT-dependent gene expression in B-lymphocytes. When expressed in epithelial cells, induces the expression of several inflammatory and angiogenic genes. Also interferes with B-lymphocytes signaling through interaction with host LYN kinase. The polypeptide is Protein K15 (K15) (Human herpesvirus 8 type P (isolate GK18) (HHV-8)).